Reading from the N-terminus, the 605-residue chain is Conglutin beta 7 (605 aa).

The first 30 residues, 1 to 30 (MARMRVRFPTLVLLLGILFLMAVSIGIAYG), serve as a signal peptide directing secretion. The segment covering 37–105 (NHERPGEREH…REPCREREQE (69 aa)) has biased composition (basic and acidic residues). Disordered regions lie at residues 37 to 193 (NHER…RFQT), 346 to 367 (LGNE…SYQD), and 382 to 405 (LRKH…NLRS). Residues 140–149 (QGSSSSSRKQ) show a composition bias toward low complexity. Residues 150 to 179 (SGYERRQYHERREQRDEKEKEQDSRSDSRR) are compositionally biased toward basic and acidic residues. In terms of domain architecture, Cupin type-1 1 spans 184 to 342 (YHFSSERFQT…TFNTRYEEIQ (159 aa)). The 163-residue stretch at 401 to 563 (FNLRSNESIY…TFPGSAQDVE (163 aa)) folds into the Cupin type-1 2 domain. 2 N-linked (GlcNAc...) asparagine glycosylation sites follow: Asn406 and Asn513. The segment at 574-593 (FANAQPQQKQQREKEGRRGR) is disordered.

It belongs to the 7S seed storage protein family. In terms of assembly, component of globulins complexes which accumulate in seeds.

Functionally, seed storage protein. Accumulates during seed development and is hydrolyzed after germination to provide a carbon and nitrogen source for the developing seedling. The polypeptide is Conglutin beta 7 (Lupinus angustifolius (Narrow-leaved blue lupine)).